The following is a 278-amino-acid chain: Large ribosomal subunit protein uL2 (278 aa).

Positions 212–221 (NRWLGKRPHN) are enriched in basic residues. Positions 212-278 (NRWLGKRPHN…ILSSRHNRKK (67 aa)) are disordered.

The protein belongs to the universal ribosomal protein uL2 family. In terms of assembly, part of the 50S ribosomal subunit. Forms a bridge to the 30S subunit in the 70S ribosome.

Functionally, one of the primary rRNA binding proteins. Required for association of the 30S and 50S subunits to form the 70S ribosome, for tRNA binding and peptide bond formation. It has been suggested to have peptidyltransferase activity; this is somewhat controversial. Makes several contacts with the 16S rRNA in the 70S ribosome. In Methylorubrum populi (strain ATCC BAA-705 / NCIMB 13946 / BJ001) (Methylobacterium populi), this protein is Large ribosomal subunit protein uL2.